The chain runs to 393 residues: Elongation factor Tu (393 aa).

One can recognise a tr-type G domain in the interval 10 to 203 (KPHVNIGTIG…AVDAFIPDPV (194 aa)). The tract at residues 19 to 26 (GHVDHGKT) is G1. 19-26 (GHVDHGKT) contributes to the GTP binding site. Residue threonine 26 participates in Mg(2+) binding. The interval 60-64 (GITIS) is G2. A G3 region spans residues 81-84 (DCPG). GTP contacts are provided by residues 81 to 85 (DCPGH) and 136 to 139 (NKVD). The interval 136–139 (NKVD) is G4. The interval 173–175 (SAL) is G5.

The protein belongs to the TRAFAC class translation factor GTPase superfamily. Classic translation factor GTPase family. EF-Tu/EF-1A subfamily. In terms of assembly, monomer.

It is found in the cytoplasm. The catalysed reaction is GTP + H2O = GDP + phosphate + H(+). Its function is as follows. GTP hydrolase that promotes the GTP-dependent binding of aminoacyl-tRNA to the A-site of ribosomes during protein biosynthesis. In Chlorobium chlorochromatii (strain CaD3), this protein is Elongation factor Tu.